Reading from the N-terminus, the 124-residue chain is Small ribosomal subunit protein uS12 (124 aa).

3-methylthioaspartic acid is present on Asp89.

This sequence belongs to the universal ribosomal protein uS12 family. As to quaternary structure, part of the 30S ribosomal subunit. Contacts proteins S8 and S17. May interact with IF1 in the 30S initiation complex.

Functionally, with S4 and S5 plays an important role in translational accuracy. In terms of biological role, interacts with and stabilizes bases of the 16S rRNA that are involved in tRNA selection in the A site and with the mRNA backbone. Located at the interface of the 30S and 50S subunits, it traverses the body of the 30S subunit contacting proteins on the other side and probably holding the rRNA structure together. The combined cluster of proteins S8, S12 and S17 appears to hold together the shoulder and platform of the 30S subunit. The polypeptide is Small ribosomal subunit protein uS12 (Shewanella sp. (strain ANA-3)).